The sequence spans 434 residues: 3-phosphoshikimate 1-carboxyvinyltransferase (434 aa).

3-phosphoshikimate is bound by residues K22, S23, and R27. Position 22 (K22) interacts with phosphoenolpyruvate. The phosphoenolpyruvate site is built by G93 and R121. 3-phosphoshikimate contacts are provided by S168, S169, Q170, S199, D320, and K347. Q170 provides a ligand contact to phosphoenolpyruvate. The Proton acceptor role is filled by D320. 3 residues coordinate phosphoenolpyruvate: R351, R394, and K419.

The protein belongs to the EPSP synthase family. In terms of assembly, monomer.

The protein resides in the cytoplasm. It catalyses the reaction 3-phosphoshikimate + phosphoenolpyruvate = 5-O-(1-carboxyvinyl)-3-phosphoshikimate + phosphate. Its pathway is metabolic intermediate biosynthesis; chorismate biosynthesis; chorismate from D-erythrose 4-phosphate and phosphoenolpyruvate: step 6/7. Functionally, catalyzes the transfer of the enolpyruvyl moiety of phosphoenolpyruvate (PEP) to the 5-hydroxyl of shikimate-3-phosphate (S3P) to produce enolpyruvyl shikimate-3-phosphate and inorganic phosphate. The protein is 3-phosphoshikimate 1-carboxyvinyltransferase of Burkholderia orbicola (strain MC0-3).